Consider the following 93-residue polypeptide: uncharacterized protein (93 aa).

The protein belongs to the SIMIBI class G3E GTPase family. ArgK/MeaB subfamily.

This is an uncharacterized protein from Streptomyces virginiae (Streptomyces cinnamonensis).